Reading from the N-terminus, the 41-residue chain is Photosystem I reaction center subunit IX (41 aa).

The chain crosses the membrane as a helical span at residues 7 to 27; the sequence is YLSSAPILATIWFAITAGILI.

This sequence belongs to the PsaJ family.

The protein localises to the cellular thylakoid membrane. In terms of biological role, may help in the organization of the PsaE and PsaF subunits. The polypeptide is Photosystem I reaction center subunit IX (Synechococcus sp. (strain ATCC 27144 / PCC 6301 / SAUG 1402/1) (Anacystis nidulans)).